Here is a 63-residue protein sequence, read N- to C-terminus: Large ribosomal subunit protein bL28 (63 aa).

This sequence belongs to the bacterial ribosomal protein bL28 family.

This Acidobacterium capsulatum (strain ATCC 51196 / DSM 11244 / BCRC 80197 / JCM 7670 / NBRC 15755 / NCIMB 13165 / 161) protein is Large ribosomal subunit protein bL28.